The sequence spans 112 residues: uncharacterized protein (112 aa).

Ser51 and Ser53 each carry phosphoserine. The chain crosses the membrane as a helical span at residues 90–110 (FIFTLSMFLIAFILLIAFVSF).

Its subcellular location is the golgi apparatus membrane. The protein localises to the endoplasmic reticulum membrane. This is an uncharacterized protein from Schizosaccharomyces pombe (strain 972 / ATCC 24843) (Fission yeast).